The following is a 193-amino-acid chain: Putative manganese efflux pump MntP (193 aa).

The next 6 membrane-spanning stretches (helical) occupy residues leucine 8 to leucine 28, leucine 37 to phenylalanine 57, phenylalanine 61 to glycine 81, methionine 109 to isoleucine 129, proline 138 to isoleucine 158, and leucine 172 to leucine 192.

The protein belongs to the MntP (TC 9.B.29) family.

The protein localises to the cell inner membrane. Its function is as follows. Probably functions as a manganese efflux pump. The sequence is that of Putative manganese efflux pump MntP from Bacteroides thetaiotaomicron (strain ATCC 29148 / DSM 2079 / JCM 5827 / CCUG 10774 / NCTC 10582 / VPI-5482 / E50).